Consider the following 252-residue polypeptide: Probable transcriptional regulatory protein RT0442 (252 aa).

Positions 1–22 (MSGHSKFKNIQHRKGAQDKKKS) are disordered.

The protein belongs to the TACO1 family.

Its subcellular location is the cytoplasm. In Rickettsia typhi (strain ATCC VR-144 / Wilmington), this protein is Probable transcriptional regulatory protein RT0442.